We begin with the raw amino-acid sequence, 269 residues long: Phycobilisome 37.5 kDa linker polypeptide, phycocyanin-associated, rod (269 aa).

The 176-residue stretch at 2–177 folds into the PBS-linker domain; the sequence is TSSTAARQLG…IYRGYANSDR (176 aa). The CpcD-like domain occupies 217-269; it reads GQLYRVRVIQADRGRTTQIRRSIQEYLVSYDQLSPTLQRLNQRGSRVVNISPA.

It belongs to the phycobilisome linker protein family.

The protein resides in the cellular thylakoid membrane. Functionally, rod linker protein, associated with phycocyanin. Linker polypeptides determine the state of aggregation and the location of the disk-shaped phycobiliprotein units within the phycobilisome and modulate their spectroscopic properties in order to mediate a directed and optimal energy transfer. The protein is Phycobilisome 37.5 kDa linker polypeptide, phycocyanin-associated, rod (cpcH2) of Microchaete diplosiphon (Fremyella diplosiphon).